The sequence spans 163 residues: Epithelial membrane protein 3 (163 aa).

Residues Leu-4–Leu-24 form a helical membrane-spanning segment. 2 N-linked (GlcNAc...) asparagine glycosylation sites follow: Asn-46 and Asn-56. The next 3 helical transmembrane spans lie at Val-66 to Phe-86, Thr-100 to Ile-120, and Phe-139 to Leu-159.

The protein belongs to the PMP-22/EMP/MP20 family.

The protein localises to the membrane. Functionally, probably involved in cell proliferation and cell-cell interactions. This Mus musculus (Mouse) protein is Epithelial membrane protein 3 (Emp3).